Consider the following 360-residue polypeptide: Terpene synthase 5 (360 aa).

The short motif at Asp-87–Arg-92 is the DDxx(x)D/E motif element. The NDxxSxxxD/E motif motif lies at Asn-237–Glu-245.

Belongs to the terpene synthase family.

Terpene synthase that converts its substrate farnesyl diphosphate (FPP) into 2 yet unidentified sesquiterpenes. This is Terpene synthase 5 from Dictyostelium purpureum (Slime mold).